Reading from the N-terminus, the 984-residue chain is Putative formate dehydrogenase SH0748 (984 aa).

One can recognise a 2Fe-2S ferredoxin-type domain in the interval 3–79; that stretch reads EHLIVTLDGT…PMTVNTQNND (77 aa). [2Fe-2S] cluster-binding residues include Cys37, Cys48, Cys51, and Cys63. The 41-residue stretch at 79–119 folds into the 4Fe-4S His(Cys)3-ligated-type domain; it reads DVKASQKEALDRILEKHMLYCTVCDYNNGDCEIHNAMDAWG. The [4Fe-4S] cluster site is built by His95, Cys99, Cys102, Cys109, Cys147, Cys150, Cys153, Cys157, Cys190, Cys193, Cys196, Cys200, Cys264, Cys267, Cys271, and Cys299. 4Fe-4S ferredoxin-type domains are found at residues 138 to 165 and 181 to 211; these read PFYRYDPDQCILCGRCVEACQDIEVNET and NDVPINESSCVSCGQCATVCPCNAMMEVNME. Residues 252 to 984 are formate dehydrogenase; it reads MRKERIKKTK…YVFPGNVVDK (733 aa). In terms of domain architecture, 4Fe-4S Mo/W bis-MGD-type spans 257-313; that stretch reads IKKTKTVCTYCGVGCSFDVWTKDREVLKVQPSHDSPANKIATCVKGKFSWGHINSDQ.

In the C-terminal section; belongs to the prokaryotic molybdopterin-containing oxidoreductase family. It depends on [2Fe-2S] cluster as a cofactor. [4Fe-4S] cluster is required as a cofactor. Requires Mo-bis(molybdopterin guanine dinucleotide) as cofactor.

The enzyme catalyses formate + NAD(+) = CO2 + NADH. This chain is Putative formate dehydrogenase SH0748, found in Staphylococcus haemolyticus (strain JCSC1435).